A 531-amino-acid polypeptide reads, in one-letter code: Large neutral amino acids transporter small subunit 2 (531 aa).

The interval 1-29 (MEKGARQRNNTAKNHPGSDTSPEAEASSG) is disordered. Residues 1–43 (MEKGARQRNNTAKNHPGSDTSPEAEASSGGGGVALKKEIGLVS) lie on the Cytoplasmic side of the membrane. Residues 7 to 21 (QRNNTAKNHPGSDTS) show a composition bias toward polar residues. A phosphoserine mark is found at S18, S21, S27, and S28. Residues 44-64 (ACGIIVGNIIGSGIFVSPKGV) form a helical membrane-spanning segment. I52 lines the L-leucine pocket. Over 65–72 (LENAGSVG) the chain is Extracellular. The helical transmembrane segment at 73–94 (LALIVWIVTGIITAVGALCYAE) threads the bilayer. The Cytoplasmic segment spans residues 95–115 (LGVTIPKSGGDYSYVKDIFGG). A helical membrane pass occupies residues 116–148 (LAGFLRLWIAVLVIYPTNQAVIALTFSNYVLQP). Residue N133 coordinates L-tryptophan. Residues 149–156 (LFPTCFPP) are Extracellular-facing. Residues 157–177 (ESGLRLLAAICLLLLTWVNCS) form a helical membrane-spanning segment. At 178-180 (SVR) the chain is on the cytoplasmic side. A helical transmembrane segment spans residues 181–209 (WATRVQDIFTAGKLLALALIIIMGIVQIC). Topologically, residues 210-229 (KGEFFWLEPKNAFENFQEPD) are extracellular. A helical transmembrane segment spans residues 230–251 (IGLVALAFLQGSFAYGGWNFLN). An L-leucine-binding site is contributed by G245. The Cytoplasmic portion of the chain corresponds to 252 to 264 (YVTEELVDPYKNL). Residues 265–286 (PRAIFISIPLVTFVYVFANIAY) traverse the membrane as a helical segment. The Extracellular portion of the chain corresponds to 287–311 (VTAMSPQELLASNAVAVTFGEKLLG). The helical transmembrane segment at 312–337 (VMAWIMPISVALSTFGGVNGSLFTSS) threads the bilayer. Residues 338–363 (RLFFAGAREGHLPSVLAMIHVKRCTP) lie on the Cytoplasmic side of the membrane. The helical transmembrane segment at 364–381 (IPALLFTCLSTLLMLVTS) threads the bilayer. At 382-385 (DMYT) the chain is on the extracellular side. Residues 386 to 407 (LINYVGFINYLFYGVTVAGQIV) form a helical membrane-spanning segment. N394 is a binding site for L-tryptophan. The Cytoplasmic segment spans residues 408-422 (LRWKKPDIPRPIKVS). The next 2 helical transmembrane spans lie at 423 to 445 (LLFPIIYLLFWAFLLIFSLWSEP) and 446 to 465 (VVCGIGLAIMLTGVPVYFLG). Over 466–531 (VYWQHKPKCF…VKDPDSEEQP (66 aa)) the chain is Cytoplasmic. The segment at 499 to 531 (NSGAEETTDDLEEQHKPIFKPTPVKDPDSEEQP) is disordered. At S527 the chain carries Phosphoserine.

The protein belongs to the amino acid-polyamine-organocation (APC) superfamily. L-type amino acid transporter (LAT) (TC 2.A.3.8) family. Disulfide-linked heterodimer composed of the catalytic light chain subunit SLC7A8 and the heavy chain subunit SLC3A2. SLC3A2 acts as a chaperone for correct plasma membrane trafficking and stabilization of SLC7A8 and modulates the substrate affinity and specificity of SLC7A8. ICAM-1 associates with the heterodimer SLC3A2/SLC7A8; facilitates leucine uptake. Strongly expressed in kidney and small intestine. Moderately present in placenta, ovary and brain. Expressed in the inner ear.

It is found in the cell membrane. The protein localises to the basolateral cell membrane. The enzyme catalyses L-histidine(in) + L-phenylalanine(out) = L-histidine(out) + L-phenylalanine(in). The catalysed reaction is L-tryptophan(in) + L-phenylalanine(out) = L-tryptophan(out) + L-phenylalanine(in). It catalyses the reaction L-isoleucine(in) + L-phenylalanine(out) = L-isoleucine(out) + L-phenylalanine(in). It carries out the reaction L-valine(in) + L-phenylalanine(out) = L-valine(out) + L-phenylalanine(in). The enzyme catalyses L-leucine(in) + L-phenylalanine(out) = L-leucine(out) + L-phenylalanine(in). The catalysed reaction is L-glutamine(in) + L-phenylalanine(out) = L-glutamine(out) + L-phenylalanine(in). It catalyses the reaction L-cysteine(in) + L-phenylalanine(out) = L-cysteine(out) + L-phenylalanine(in). It carries out the reaction L-phenylalanine(out) + L-methionine(in) = L-phenylalanine(in) + L-methionine(out). The enzyme catalyses L-leucine(out) + L-methionine(in) = L-leucine(in) + L-methionine(out). The catalysed reaction is L-cysteine(out) + L-methionine(in) = L-cysteine(in) + L-methionine(out). It catalyses the reaction S-methylmercury-L-cysteine(out) + L-methionine(in) = S-methylmercury-L-cysteine(in) + L-methionine(out). It carries out the reaction S-methylmercury-L-cysteine(in) + L-leucine(out) = S-methylmercury-L-cysteine(out) + L-leucine(in). The enzyme catalyses S-methylmercury-L-cysteine(in) + L-phenylalanine(out) = S-methylmercury-L-cysteine(out) + L-phenylalanine(in). The catalysed reaction is L-phenylalanine(out) + L-serine(in) = L-phenylalanine(in) + L-serine(out). It catalyses the reaction L-phenylalanine(out) + glycine(in) = L-phenylalanine(in) + glycine(out). It carries out the reaction L-phenylalanine(out) + L-alanine(in) = L-phenylalanine(in) + L-alanine(out). The enzyme catalyses L-tryptophan(in) = L-tryptophan(out). The catalysed reaction is 3,3',5-triiodo-L-thyronine(out) = 3,3',5-triiodo-L-thyronine(in). It catalyses the reaction 3,3'-diiodo-L-thyronine(out) = 3,3'-diiodo-L-thyronine(in). It carries out the reaction L-dopa(out) + L-phenylalanine(in) = L-dopa(in) + L-phenylalanine(out). Associates with SLC3A2 to form a functional heterodimeric complex that translocates small and large neutral amino acids with broad specificity and a stoichiometry of 1:1. Functions as amino acid antiporter mediating the influx of extracellular essential amino acids mainly in exchange with the efflux of highly concentrated intracellular amino acids. Has relatively symmetrical selectivities but strongly asymmetrical substrate affinities at both the intracellular and extracellular sides of the transporter. This asymmetry allows SLC7A8 to regulate intracellular amino acid pools (mM concentrations) by exchange with external amino acids (uM concentration range), equilibrating the relative concentrations of different amino acids across the plasma membrane instead of mediating their net uptake. May play an essential role in the reabsorption of neutral amino acids from the epithelial cells to the bloodstream in the kidney. Involved in the uptake of methylmercury (MeHg) when administered as the L-cysteine or D,L-homocysteine complexes, and hence plays a role in metal ion homeostasis and toxicity. Involved in the cellular activity of small molecular weight nitrosothiols, via the stereoselective transport of L-nitrosocysteine (L-CNSO) across the transmembrane. Imports the thyroid hormone diiodothyronine (T2) and to a smaller extent triiodothyronine (T3) but not rT 3 or thyroxine (T4). Mediates the uptake of L-DOPA. May participate in auditory function. The polypeptide is Large neutral amino acids transporter small subunit 2 (Slc7a8) (Mus musculus (Mouse)).